The chain runs to 163 residues: Large ribosomal subunit protein uL10 (163 aa).

This sequence belongs to the universal ribosomal protein uL10 family. In terms of assembly, part of the ribosomal stalk of the 50S ribosomal subunit. The N-terminus interacts with L11 and the large rRNA to form the base of the stalk. The C-terminus forms an elongated spine to which L12 dimers bind in a sequential fashion forming a multimeric L10(L12)X complex.

In terms of biological role, forms part of the ribosomal stalk, playing a central role in the interaction of the ribosome with GTP-bound translation factors. This Mannheimia succiniciproducens (strain KCTC 0769BP / MBEL55E) protein is Large ribosomal subunit protein uL10.